The primary structure comprises 443 residues: Aspartate--tRNA(Asp/Asn) ligase (443 aa).

Position 175 (Glu175) interacts with L-aspartate. Residues 197–200 (QLFK) form an aspartate region. An L-aspartate-binding site is contributed by Arg219. Residues 219 to 221 (RAE), 227 to 229 (RHL), and Glu366 contribute to the ATP site. Glu366 and Ser369 together coordinate Mg(2+). L-aspartate contacts are provided by Ser369 and Arg373. 414–417 (GCER) provides a ligand contact to ATP.

Belongs to the class-II aminoacyl-tRNA synthetase family. Type 2 subfamily. Homodimer. It depends on Mg(2+) as a cofactor.

The protein localises to the cytoplasm. It carries out the reaction tRNA(Asx) + L-aspartate + ATP = L-aspartyl-tRNA(Asx) + AMP + diphosphate. Functionally, aspartyl-tRNA synthetase with relaxed tRNA specificity since it is able to aspartylate not only its cognate tRNA(Asp) but also tRNA(Asn). Reaction proceeds in two steps: L-aspartate is first activated by ATP to form Asp-AMP and then transferred to the acceptor end of tRNA(Asp/Asn). The protein is Aspartate--tRNA(Asp/Asn) ligase of Methanococcoides burtonii (strain DSM 6242 / NBRC 107633 / OCM 468 / ACE-M).